A 121-amino-acid polypeptide reads, in one-letter code: Large ribosomal subunit protein bL19 (121 aa).

The protein belongs to the bacterial ribosomal protein bL19 family.

Functionally, this protein is located at the 30S-50S ribosomal subunit interface and may play a role in the structure and function of the aminoacyl-tRNA binding site. In Neisseria gonorrhoeae (strain ATCC 700825 / FA 1090), this protein is Large ribosomal subunit protein bL19.